The primary structure comprises 360 residues: Phospho-N-acetylmuramoyl-pentapeptide-transferase (360 aa).

The next 10 helical transmembrane spans lie at Arg25–Ile45, Thr73–Leu93, Tyr97–Tyr117, Tyr134–Thr154, Leu168–Ser188, Gly199–Ser219, Ala236–Phe256, Val263–Ile283, Val288–Val308, and Val338–Lys358.

It belongs to the glycosyltransferase 4 family. MraY subfamily. Mg(2+) is required as a cofactor.

The protein resides in the cell inner membrane. The enzyme catalyses UDP-N-acetyl-alpha-D-muramoyl-L-alanyl-gamma-D-glutamyl-meso-2,6-diaminopimeloyl-D-alanyl-D-alanine + di-trans,octa-cis-undecaprenyl phosphate = di-trans,octa-cis-undecaprenyl diphospho-N-acetyl-alpha-D-muramoyl-L-alanyl-D-glutamyl-meso-2,6-diaminopimeloyl-D-alanyl-D-alanine + UMP. It participates in cell wall biogenesis; peptidoglycan biosynthesis. Its function is as follows. Catalyzes the initial step of the lipid cycle reactions in the biosynthesis of the cell wall peptidoglycan: transfers peptidoglycan precursor phospho-MurNAc-pentapeptide from UDP-MurNAc-pentapeptide onto the lipid carrier undecaprenyl phosphate, yielding undecaprenyl-pyrophosphoryl-MurNAc-pentapeptide, known as lipid I. This is Phospho-N-acetylmuramoyl-pentapeptide-transferase from Pseudomonas entomophila (strain L48).